A 712-amino-acid chain; its full sequence is Polyphosphate kinase (712 aa).

An ATP-binding site is contributed by Asn-49. Arg-398 and Arg-428 together coordinate Mg(2+). His-458 serves as the catalytic Phosphohistidine intermediate. ATP contacts are provided by Tyr-491, Arg-587, and His-615.

It belongs to the polyphosphate kinase 1 (PPK1) family. The cofactor is Mg(2+). In terms of processing, an intermediate of this reaction is the autophosphorylated ppk in which a phosphate is covalently linked to a histidine residue through a N-P bond.

The catalysed reaction is [phosphate](n) + ATP = [phosphate](n+1) + ADP. Its function is as follows. Catalyzes the reversible transfer of the terminal phosphate of ATP to form a long-chain polyphosphate (polyP). This chain is Polyphosphate kinase, found in Prochlorococcus marinus (strain MIT 9313).